The chain runs to 393 residues: NAD(P)H-quinone oxidoreductase subunit H, chloroplastic (393 aa).

Belongs to the complex I 49 kDa subunit family. As to quaternary structure, NDH is composed of at least 16 different subunits, 5 of which are encoded in the nucleus.

It localises to the plastid. Its subcellular location is the chloroplast thylakoid membrane. The catalysed reaction is a plastoquinone + NADH + (n+1) H(+)(in) = a plastoquinol + NAD(+) + n H(+)(out). It catalyses the reaction a plastoquinone + NADPH + (n+1) H(+)(in) = a plastoquinol + NADP(+) + n H(+)(out). NDH shuttles electrons from NAD(P)H:plastoquinone, via FMN and iron-sulfur (Fe-S) centers, to quinones in the photosynthetic chain and possibly in a chloroplast respiratory chain. The immediate electron acceptor for the enzyme in this species is believed to be plastoquinone. Couples the redox reaction to proton translocation, and thus conserves the redox energy in a proton gradient. The sequence is that of NAD(P)H-quinone oxidoreductase subunit H, chloroplastic from Lolium perenne (Perennial ryegrass).